We begin with the raw amino-acid sequence, 190 residues long: Molybdenum cofactor guanylyltransferase (190 aa).

Residues 8–10 (LAG), K20, D64, and D98 each bind GTP. D98 is a Mg(2+) binding site.

Belongs to the MobA family. In terms of assembly, monomer. It depends on Mg(2+) as a cofactor.

It localises to the cytoplasm. The enzyme catalyses Mo-molybdopterin + GTP + H(+) = Mo-molybdopterin guanine dinucleotide + diphosphate. Transfers a GMP moiety from GTP to Mo-molybdopterin (Mo-MPT) cofactor (Moco or molybdenum cofactor) to form Mo-molybdopterin guanine dinucleotide (Mo-MGD) cofactor. The protein is Molybdenum cofactor guanylyltransferase of Rhodobacter capsulatus (Rhodopseudomonas capsulata).